A 478-amino-acid chain; its full sequence is Cytochrome c-552 (478 aa).

The signal sequence occupies residues 1–26; the sequence is MARKTLRARRFFSLIFPFFFITSVYA. Residue His94 participates in heme c binding. Cys122, Cys125, and Lys126 together coordinate heme. Positions 160, 163, 164, 209, 212, and 213 each coordinate heme c. Ca(2+) contacts are provided by Glu215, Tyr216, Lys261, and Gln263. A substrate-binding site is contributed by Tyr216. Position 264 (His264) interacts with substrate. Heme c is bound by residues His275, Cys282, Cys285, His286, His301, Cys314, Cys317, His318, and His393.

This sequence belongs to the cytochrome c-552 family. Ca(2+) serves as cofactor. It depends on heme c as a cofactor.

The protein resides in the periplasm. The catalysed reaction is 6 Fe(III)-[cytochrome c] + NH4(+) + 2 H2O = 6 Fe(II)-[cytochrome c] + nitrite + 8 H(+). It participates in nitrogen metabolism; nitrate reduction (assimilation). Functionally, catalyzes the reduction of nitrite to ammonia, consuming six electrons in the process. This chain is Cytochrome c-552, found in Salmonella typhi.